The primary structure comprises 178 residues: Crossover junction endodeoxyribonuclease RuvC (178 aa).

Active-site residues include D7, E68, and D141. Residues D7, E68, and D141 each coordinate Mg(2+).

Belongs to the RuvC family. As to quaternary structure, homodimer which binds Holliday junction (HJ) DNA. The HJ becomes 2-fold symmetrical on binding to RuvC with unstacked arms; it has a different conformation from HJ DNA in complex with RuvA. In the full resolvosome a probable DNA-RuvA(4)-RuvB(12)-RuvC(2) complex forms which resolves the HJ. It depends on Mg(2+) as a cofactor.

It is found in the cytoplasm. It carries out the reaction Endonucleolytic cleavage at a junction such as a reciprocal single-stranded crossover between two homologous DNA duplexes (Holliday junction).. The RuvA-RuvB-RuvC complex processes Holliday junction (HJ) DNA during genetic recombination and DNA repair. Endonuclease that resolves HJ intermediates. Cleaves cruciform DNA by making single-stranded nicks across the HJ at symmetrical positions within the homologous arms, yielding a 5'-phosphate and a 3'-hydroxyl group; requires a central core of homology in the junction. The consensus cleavage sequence is 5'-(A/T)TT(C/G)-3'. Cleavage occurs on the 3'-side of the TT dinucleotide at the point of strand exchange. HJ branch migration catalyzed by RuvA-RuvB allows RuvC to scan DNA until it finds its consensus sequence, where it cleaves and resolves the cruciform DNA. The polypeptide is Crossover junction endodeoxyribonuclease RuvC (Parafrankia sp. (strain EAN1pec)).